A 319-amino-acid polypeptide reads, in one-letter code: Acetyl-coenzyme A carboxylase carboxyl transferase subunit alpha (319 aa).

A CoA carboxyltransferase C-terminal domain is found at 35 to 296 (DLDKEIEQLE…KANLLRQLED (262 aa)).

It belongs to the AccA family. In terms of assembly, acetyl-CoA carboxylase is a heterohexamer composed of biotin carboxyl carrier protein (AccB), biotin carboxylase (AccC) and two subunits each of ACCase subunit alpha (AccA) and ACCase subunit beta (AccD).

The protein localises to the cytoplasm. The enzyme catalyses N(6)-carboxybiotinyl-L-lysyl-[protein] + acetyl-CoA = N(6)-biotinyl-L-lysyl-[protein] + malonyl-CoA. The protein operates within lipid metabolism; malonyl-CoA biosynthesis; malonyl-CoA from acetyl-CoA: step 1/1. In terms of biological role, component of the acetyl coenzyme A carboxylase (ACC) complex. First, biotin carboxylase catalyzes the carboxylation of biotin on its carrier protein (BCCP) and then the CO(2) group is transferred by the carboxyltransferase to acetyl-CoA to form malonyl-CoA. This is Acetyl-coenzyme A carboxylase carboxyl transferase subunit alpha from Vibrio campbellii (strain ATCC BAA-1116).